We begin with the raw amino-acid sequence, 65 residues long: Large ribosomal subunit protein uL29 (65 aa).

Belongs to the universal ribosomal protein uL29 family.

In Buchnera aphidicola subsp. Baizongia pistaciae (strain Bp), this protein is Large ribosomal subunit protein uL29.